Reading from the N-terminus, the 166-residue chain is MELYIVDEREGVTKAPEMEESWQLMLEQLAFACLEEVGYPLEDTEISLVLTNDEKIRRLNAEYRNIDQPTDVLSFAMEEGLDDEADFHFDDPTAGKVLGDIIISVETAERQAQEYGHSLEREMGFLFVHGMLHLLGYDHCDEEQRSRMRALEEKILRNQGLQREWT.

Zn(2+) contacts are provided by His-129, His-133, and His-139.

The protein belongs to the endoribonuclease YbeY family. Requires Zn(2+) as cofactor.

It is found in the cytoplasm. Its function is as follows. Single strand-specific metallo-endoribonuclease involved in late-stage 70S ribosome quality control and in maturation of the 3' terminus of the 16S rRNA. The protein is Endoribonuclease YbeY of Heliobacterium modesticaldum (strain ATCC 51547 / Ice1).